We begin with the raw amino-acid sequence, 21 residues long: Putative sperm adenylate cyclase (21 aa).

The catalysed reaction is ATP = 3',5'-cyclic AMP + diphosphate. This chain is Putative sperm adenylate cyclase, found in Mus musculus (Mouse).